A 268-amino-acid polypeptide reads, in one-letter code: Shikimate dehydrogenase (NADP(+)) (268 aa).

Shikimate contacts are provided by residues 13–15 (SLS) and Thr-60. The active-site Proton acceptor is the Lys-64. An NADP(+)-binding site is contributed by Glu-76. Positions 85 and 100 each coordinate shikimate. NADP(+)-binding positions include 124-128 (GAGGA), 148-153 (NRTMAR), and Ile-209. Tyr-211 is a shikimate binding site. Gly-232 contacts NADP(+).

This sequence belongs to the shikimate dehydrogenase family. In terms of assembly, homodimer.

It carries out the reaction shikimate + NADP(+) = 3-dehydroshikimate + NADPH + H(+). It participates in metabolic intermediate biosynthesis; chorismate biosynthesis; chorismate from D-erythrose 4-phosphate and phosphoenolpyruvate: step 4/7. Involved in the biosynthesis of the chorismate, which leads to the biosynthesis of aromatic amino acids. Catalyzes the reversible NADPH linked reduction of 3-dehydroshikimate (DHSA) to yield shikimate (SA). The sequence is that of Shikimate dehydrogenase (NADP(+)) from Staphylococcus aureus (strain USA300).